The sequence spans 521 residues: Bacillolysin (521 aa).

A signal peptide spans 1 to 27 (MGLGKKLSVAVAASFMSLSISLPGVQA). A propeptide spans 28 to 221 (AEGHQLKENQ…ILKQQNKVEH (194 aa)) (activation peptide). A Ca(2+)-binding site is contributed by Asp-360. His-364 lines the Zn(2+) pocket. Residue Glu-365 is part of the active site. Residues His-368 and Glu-388 each coordinate Zn(2+). Ca(2+) is bound by residues Asp-399, Asp-402, Asp-404, and Glu-407. His-449 serves as the catalytic Proton donor.

The protein belongs to the peptidase M4 family. Requires Ca(2+) as cofactor. Zn(2+) serves as cofactor.

Its subcellular location is the secreted. The catalysed reaction is Similar, but not identical, to that of thermolysin.. Its function is as follows. Extracellular zinc metalloprotease. The polypeptide is Bacillolysin (nprE) (Bacillus subtilis subsp. amylosacchariticus).